The sequence spans 360 residues: 45 kDa calcium-binding protein (360 aa).

Residues 1–29 (MVSKQAFLFSLGSLYLSLLFVFLLMDVYA) form the signal peptide. A glycan (N-linked (GlcNAc...) asparagine) is linked at Asn33. 5 consecutive EF-hand domains span residues 96 to 131 (RNRRKLAAIFAKVDRNEDKQISANEMQRWIMEKTEE), 135 to 170 (EAVNENKLHFRAVDPDGDGHVSWDEYKIKFLASKGF), 231 to 266 (MLKFMVKEIIRDLDQDGDKKLTLSEFISLPVGTVEN), 276 to 311 (WVRDRKKEYEEVIDANHDGIVTMEELEEYMDPMNEY), and 312 to 347 (NALNEAKQMIAVADENQDHHLSLEEILKYSEYFTGS). 24 residues coordinate Ca(2+): Asp109, Asn111, Asp113, Gln115, Glu120, Asp148, Asp150, Asp152, His154, Glu159, Asp244, Asp246, Asp248, Lys250, Glu255, Asp289, Asn291, Asp293, Glu300, Asp325, Asn327, Asp329, His331, and Glu336.

This sequence belongs to the CREC family.

The protein localises to the golgi apparatus lumen. May regulate calcium-dependent activities in the endoplasmic reticulum lumen or post-ER compartment. This Xenopus tropicalis (Western clawed frog) protein is 45 kDa calcium-binding protein (sdf4).